An 81-amino-acid chain; its full sequence is Small ribosomal subunit protein bS16 (81 aa).

Belongs to the bacterial ribosomal protein bS16 family.

The chain is Small ribosomal subunit protein bS16 from Caldicellulosiruptor bescii (strain ATCC BAA-1888 / DSM 6725 / KCTC 15123 / Z-1320) (Anaerocellum thermophilum).